The primary structure comprises 36 residues: Photosystem II reaction center protein M (36 aa).

Residues 5–25 (ILGVIAVALFILIPTSFLLIL) traverse the membrane as a helical segment.

Belongs to the PsbM family. In terms of assembly, PSII is composed of 1 copy each of membrane proteins PsbA, PsbB, PsbC, PsbD, PsbE, PsbF, PsbH, PsbI, PsbJ, PsbK, PsbL, PsbM, PsbT, PsbY, PsbZ, Psb30/Ycf12, at least 3 peripheral proteins of the oxygen-evolving complex and a large number of cofactors. It forms dimeric complexes.

It localises to the plastid. The protein localises to the chloroplast thylakoid membrane. In terms of biological role, one of the components of the core complex of photosystem II (PSII). PSII is a light-driven water:plastoquinone oxidoreductase that uses light energy to abstract electrons from H(2)O, generating O(2) and a proton gradient subsequently used for ATP formation. It consists of a core antenna complex that captures photons, and an electron transfer chain that converts photonic excitation into a charge separation. This subunit is found at the monomer-monomer interface. The chain is Photosystem II reaction center protein M from Bigelowiella natans (Pedinomonas minutissima).